A 63-amino-acid polypeptide reads, in one-letter code: Large ribosomal subunit protein bL32 (63 aa).

The tract at residues 1–27 (MANPKAKMSKSRRDKRRAQFNARTKPA) is disordered. Positions 7–18 (KMSKSRRDKRRA) are enriched in basic residues.

The protein belongs to the bacterial ribosomal protein bL32 family.

This is Large ribosomal subunit protein bL32 from Pelodictyon phaeoclathratiforme (strain DSM 5477 / BU-1).